A 149-amino-acid polypeptide reads, in one-letter code: Aquaporin-like protein 2 (149 aa).

Residues 1 to 35 (MSNESNDLEKNISHLDPTGVDNAYIPPEQPETKHS) are disordered. At 1–47 (MSNESNDLEKNISHLDPTGVDNAYIPPEQPETKHSRFNIDRDTLRNH) the chain is on the cytoplasmic side. A helical transmembrane segment spans residues 48 to 68 (FIAAVGEFCGTFMFLWCAYVI). Over 69 to 89 (CNVANHDVALTTEPEGSHPGQ) the chain is Extracellular. Residues 90-110 (LIMIALGFGFSVMFSIWCFWW) form a helical membrane-spanning segment. Residues 111 to 149 (GFEPSRFSLFVFGQSHLSSQMCSDVVSSDHCWDGCWWCR) are Cytoplasmic-facing.

The protein belongs to the MIP/aquaporin (TC 1.A.8) family.

The protein localises to the endoplasmic reticulum membrane. The protein resides in the cell membrane. Water channel required to facilitate the transport of water across membranes. Involved in freeze tolerance, osmotolerance and cell flocculation in liquid cultures. Is non-functional in most laboratory strains. The chain is Aquaporin-like protein 2 (AQY2-2) from Saccharomyces cerevisiae (strain RM11-1a) (Baker's yeast).